The following is a 430-amino-acid chain: Trigger factor (430 aa).

Residues 163–248 enclose the PPIase FKBP-type domain; sequence GDIAVIDFEG…LNSLKRKNMP (86 aa).

Belongs to the FKBP-type PPIase family. Tig subfamily.

Its subcellular location is the cytoplasm. It carries out the reaction [protein]-peptidylproline (omega=180) = [protein]-peptidylproline (omega=0). In terms of biological role, involved in protein export. Acts as a chaperone by maintaining the newly synthesized protein in an open conformation. Functions as a peptidyl-prolyl cis-trans isomerase. The polypeptide is Trigger factor (Brevibacillus brevis (strain 47 / JCM 6285 / NBRC 100599)).